A 245-amino-acid polypeptide reads, in one-letter code: tRNA pseudouridine synthase A (245 aa).

The active-site Nucleophile is D52. Residue Y111 participates in substrate binding.

It belongs to the tRNA pseudouridine synthase TruA family. As to quaternary structure, homodimer.

It catalyses the reaction uridine(38/39/40) in tRNA = pseudouridine(38/39/40) in tRNA. Its function is as follows. Formation of pseudouridine at positions 38, 39 and 40 in the anticodon stem and loop of transfer RNAs. This chain is tRNA pseudouridine synthase A, found in Rickettsia peacockii (strain Rustic).